A 249-amino-acid chain; its full sequence is Uroplakin-3b-like protein 1 (249 aa).

A signal peptide spans 1 to 26 (MGPHGKQSVLRMPLLLLLTCVQSGTG). Over 27–194 (LESINYAPQL…PGSQGKGTVV (168 aa)) the chain is Extracellular. Residues N63, N82, and N133 are each glycosylated (N-linked (GlcNAc...) asparagine). The chain crosses the membrane as a helical span at residues 195-215 (IIAFLSILLAILLVVFLVLVI). The Cytoplasmic segment spans residues 216–249 (SACLSTSGSSPEEQVRMRHYHTHHMGSLRAERSS).

It belongs to the uroplakin-3 family.

The protein localises to the membrane. This Mus musculus (Mouse) protein is Uroplakin-3b-like protein 1.